The following is a 646-amino-acid chain: Protein real-time (646 aa).

The region spanning 2 to 175 (VQKYESPVRI…FINELKKEGI (174 aa)) is the PRELI/MSF1 domain. In terms of domain architecture, CRAL-TRIO spans 294-471 (TPVVVEKYFP…FLGGSCITMI (178 aa)). One can recognise a GOLD domain in the interval 499 to 646 (HHGLYKSVDL…GFSSNSLQSR (148 aa)).

The protein resides in the mitochondrion. This Aedes aegypti (Yellowfever mosquito) protein is Protein real-time.